Here is a 149-residue protein sequence, read N- to C-terminus: Large ribosomal subunit protein bL9 (149 aa).

This sequence belongs to the bacterial ribosomal protein bL9 family.

Functionally, binds to the 23S rRNA. This is Large ribosomal subunit protein bL9 from Klebsiella pneumoniae (strain 342).